The following is a 330-amino-acid chain: Aspartate--ammonia ligase (330 aa).

The protein belongs to the class-II aminoacyl-tRNA synthetase family. AsnA subfamily.

It localises to the cytoplasm. It catalyses the reaction L-aspartate + NH4(+) + ATP = L-asparagine + AMP + diphosphate + H(+). It participates in amino-acid biosynthesis; L-asparagine biosynthesis; L-asparagine from L-aspartate (ammonia route): step 1/1. The protein is Aspartate--ammonia ligase of Escherichia coli O127:H6 (strain E2348/69 / EPEC).